A 69-amino-acid chain; its full sequence is Cytochrome c oxidase subunit 8A, mitochondrial (69 aa).

A mitochondrion-targeting transit peptide spans 1-25; that stretch reads MSVLTPLLLRGLTGSARRLPMPCAR. The short motif at 2–19 is the SIFI-degron element; that stretch reads SVLTPLLLRGLTGSARRL. Residues 26–36 lie on the Mitochondrial matrix side of the membrane; the sequence is VHSKPPREQLG. The chain crosses the membrane as a helical span at residues 37–60; that stretch reads TMDIAIGLTSCFVCFLLPSGWVLS. Residues 61-69 lie on the Mitochondrial intermembrane side of the membrane; sequence HLENYKKRE.

This sequence belongs to the cytochrome c oxidase VIII family. Component of the cytochrome c oxidase (complex IV, CIV), a multisubunit enzyme composed of 14 subunits. The complex is composed of a catalytic core of 3 subunits MT-CO1, MT-CO2 and MT-CO3, encoded in the mitochondrial DNA, and 11 supernumerary subunits COX4I, COX5A, COX5B, COX6A, COX6B, COX6C, COX7A, COX7B, COX7C, COX8 and NDUFA4, which are encoded in the nuclear genome. The complex exists as a monomer or a dimer and forms supercomplexes (SCs) in the inner mitochondrial membrane with NADH-ubiquinone oxidoreductase (complex I, CI) and ubiquinol-cytochrome c oxidoreductase (cytochrome b-c1 complex, complex III, CIII), resulting in different assemblies (supercomplex SCI(1)III(2)IV(1) and megacomplex MCI(2)III(2)IV(2)). In response to mitochondrial stress, the precursor protein is ubiquitinated by the SIFI complex in the cytoplasm before mitochondrial import, leading to its degradation. Within the SIFI complex, UBR4 initiates ubiquitin chain that are further elongated or branched by KCMF1.

The protein resides in the mitochondrion inner membrane. The protein operates within energy metabolism; oxidative phosphorylation. Component of the cytochrome c oxidase, the last enzyme in the mitochondrial electron transport chain which drives oxidative phosphorylation. The respiratory chain contains 3 multisubunit complexes succinate dehydrogenase (complex II, CII), ubiquinol-cytochrome c oxidoreductase (cytochrome b-c1 complex, complex III, CIII) and cytochrome c oxidase (complex IV, CIV), that cooperate to transfer electrons derived from NADH and succinate to molecular oxygen, creating an electrochemical gradient over the inner membrane that drives transmembrane transport and the ATP synthase. Cytochrome c oxidase is the component of the respiratory chain that catalyzes the reduction of oxygen to water. Electrons originating from reduced cytochrome c in the intermembrane space (IMS) are transferred via the dinuclear copper A center (CU(A)) of subunit 2 and heme A of subunit 1 to the active site in subunit 1, a binuclear center (BNC) formed by heme A3 and copper B (CU(B)). The BNC reduces molecular oxygen to 2 water molecules using 4 electrons from cytochrome c in the IMS and 4 protons from the mitochondrial matrix. This is Cytochrome c oxidase subunit 8A, mitochondrial (COX8A) from Nycticebus coucang (Slow loris).